The sequence spans 191 residues: A-type ATP synthase subunit E (191 aa).

This sequence belongs to the V-ATPase E subunit family. Has multiple subunits with at least A(3), B(3), C, D, E, F, H, I and proteolipid K(x). The N-terminus is blocked.

The protein resides in the cell membrane. Functionally, component of the A-type ATP synthase that produces ATP from ADP in the presence of a proton gradient across the membrane. The chain is A-type ATP synthase subunit E from Sulfurisphaera tokodaii (strain DSM 16993 / JCM 10545 / NBRC 100140 / 7) (Sulfolobus tokodaii).